A 140-amino-acid polypeptide reads, in one-letter code: Organic hydroperoxide resistance protein-like (140 aa).

Belongs to the OsmC/Ohr family.

This Mycoplasma pneumoniae (strain ATCC 29342 / M129 / Subtype 1) (Mycoplasmoides pneumoniae) protein is Organic hydroperoxide resistance protein-like.